The sequence spans 152 residues: Deoxyuridine 5'-triphosphate nucleotidohydrolase (152 aa).

Residues 71-73 (RSG), Asn-84, 88-90 (LID), and Met-98 contribute to the substrate site.

This sequence belongs to the dUTPase family. Mg(2+) serves as cofactor.

It carries out the reaction dUTP + H2O = dUMP + diphosphate + H(+). It participates in pyrimidine metabolism; dUMP biosynthesis; dUMP from dCTP (dUTP route): step 2/2. In terms of biological role, this enzyme is involved in nucleotide metabolism: it produces dUMP, the immediate precursor of thymidine nucleotides and it decreases the intracellular concentration of dUTP so that uracil cannot be incorporated into DNA. The polypeptide is Deoxyuridine 5'-triphosphate nucleotidohydrolase (Serratia proteamaculans (strain 568)).